The following is a 379-amino-acid chain: 3-dehydroquinate synthase (379 aa).

NAD(+) is bound by residues 67-72 (PGEKNK), 101-105 (GIVLD), 125-126 (TT), Lys-138, and Lys-147. Zn(2+) is bound by residues Glu-180, His-242, and His-258.

This sequence belongs to the sugar phosphate cyclases superfamily. Dehydroquinate synthase family. The cofactor is NAD(+). Co(2+) serves as cofactor. Requires Zn(2+) as cofactor.

The protein localises to the cytoplasm. The catalysed reaction is 7-phospho-2-dehydro-3-deoxy-D-arabino-heptonate = 3-dehydroquinate + phosphate. The protein operates within metabolic intermediate biosynthesis; chorismate biosynthesis; chorismate from D-erythrose 4-phosphate and phosphoenolpyruvate: step 2/7. Its function is as follows. Catalyzes the conversion of 3-deoxy-D-arabino-heptulosonate 7-phosphate (DAHP) to dehydroquinate (DHQ). The chain is 3-dehydroquinate synthase from Chlamydia felis (strain Fe/C-56) (Chlamydophila felis).